The chain runs to 322 residues: Acetyl-coenzyme A carboxylase carboxyl transferase subunit alpha 2 (322 aa).

Residues 37-294 enclose the CoA carboxyltransferase C-terminal domain; sequence EINRLSARSE…KRVLQESLRN (258 aa).

The protein belongs to the AccA family. Acetyl-CoA carboxylase is a heterohexamer composed of biotin carboxyl carrier protein (AccB), biotin carboxylase (AccC) and two subunits each of ACCase subunit alpha (AccA) and ACCase subunit beta (AccD).

The protein resides in the cytoplasm. It catalyses the reaction N(6)-carboxybiotinyl-L-lysyl-[protein] + acetyl-CoA = N(6)-biotinyl-L-lysyl-[protein] + malonyl-CoA. The protein operates within lipid metabolism; malonyl-CoA biosynthesis; malonyl-CoA from acetyl-CoA: step 1/1. Functionally, component of the acetyl coenzyme A carboxylase (ACC) complex. First, biotin carboxylase catalyzes the carboxylation of biotin on its carrier protein (BCCP) and then the CO(2) group is transferred by the carboxyltransferase to acetyl-CoA to form malonyl-CoA. Confers resistance to the endogenous polyketide antibiotic thailandamide. Can replace the endogenous gene in S.typhimurium, conferring slow growth and resistance to thailandamide. Can also replace the endogenous gene in E.coli, conferring resistance to thailandamide. This chain is Acetyl-coenzyme A carboxylase carboxyl transferase subunit alpha 2, found in Burkholderia thailandensis (strain ATCC 700388 / DSM 13276 / CCUG 48851 / CIP 106301 / E264).